A 548-amino-acid chain; its full sequence is Probable malate:quinone oxidoreductase (548 aa).

The protein belongs to the MQO family. FAD serves as cofactor.

It catalyses the reaction (S)-malate + a quinone = a quinol + oxaloacetate. The protein operates within carbohydrate metabolism; tricarboxylic acid cycle; oxaloacetate from (S)-malate (quinone route): step 1/1. The sequence is that of Probable malate:quinone oxidoreductase from Escherichia coli O127:H6 (strain E2348/69 / EPEC).